The sequence spans 204 residues: dITP/XTP pyrophosphatase (204 aa).

11–16 (SRNRKK) provides a ligand contact to substrate. The Proton acceptor role is filled by Asp76. Asp76 serves as a coordination point for Mg(2+). Residues Ser77, 158-161 (FGYD), Lys181, and 186-187 (HR) each bind substrate.

It belongs to the HAM1 NTPase family. Homodimer. The cofactor is Mg(2+).

The catalysed reaction is XTP + H2O = XMP + diphosphate + H(+). It carries out the reaction dITP + H2O = dIMP + diphosphate + H(+). It catalyses the reaction ITP + H2O = IMP + diphosphate + H(+). In terms of biological role, pyrophosphatase that catalyzes the hydrolysis of nucleoside triphosphates to their monophosphate derivatives, with a high preference for the non-canonical purine nucleotides XTP (xanthosine triphosphate), dITP (deoxyinosine triphosphate) and ITP. Seems to function as a house-cleaning enzyme that removes non-canonical purine nucleotides from the nucleotide pool, thus preventing their incorporation into DNA/RNA and avoiding chromosomal lesions. This is dITP/XTP pyrophosphatase from Mycobacterium tuberculosis (strain CDC 1551 / Oshkosh).